The sequence spans 658 residues: Non-reducing end beta-L-arabinofuranosidase (658 aa).

Beta-L-arabinofuranose-binding positions include His-142, 192–194 (DGH), His-270, and Glu-322. Glu-322 functions as the Proton donor/acceptor in the catalytic mechanism. Residues Glu-338, Cys-340, Cys-417, and Cys-418 each coordinate Zn(2+). The active-site Nucleophile; S-glycosyl-cysteine intermediate is Cys-417.

The protein belongs to the glycosyl hydrolase 127 family. Homodimer in solution. Zn(2+) serves as cofactor.

It carries out the reaction beta-L-arabinofuranosyl-(1-&gt;2)-beta-L-arabinofuranose + H2O = 2 beta-L-arabinofuranose. Strongly inhibited in the presence of thiol modifiers, suggesting a crucial role for cysteine residues in catalysis. Slightly inhibited by EDTA. In terms of biological role, beta-L-arabinofuranosidase that removes the beta-L-arabinofuranose residue from the non-reducing end of various substrates, including beta-L-arabinofuranosyl-hydroxyproline (Ara-Hyp), Ara-beta-1,2-Ara-beta-Hyp (Ara(2)-Hyp), Ara-beta-1,2-Ara-beta-1,2-Ara-beta-Hyp (Ara(3)-Hyp), and beta-L-arabinofuranosyl-(1-&gt;2)-1-O-methyl-beta-L-arabinofuranose. In the presence of 1-alkanols, shows transglycosylation activity, retaining the anomeric configuration of the arabinofuranose residue. This Bifidobacterium longum subsp. longum (strain ATCC 15707 / DSM 20219 / JCM 1217 / NCTC 11818 / E194b) protein is Non-reducing end beta-L-arabinofuranosidase.